A 214-amino-acid polypeptide reads, in one-letter code: Thymidylate kinase (214 aa).

10-17 (GGEGAGKS) contacts ATP.

Belongs to the thymidylate kinase family.

It catalyses the reaction dTMP + ATP = dTDP + ADP. Functionally, phosphorylation of dTMP to form dTDP in both de novo and salvage pathways of dTTP synthesis. This is Thymidylate kinase from Brucella suis (strain ATCC 23445 / NCTC 10510).